We begin with the raw amino-acid sequence, 448 residues long: MEQNMGQAKIYSVSQLNQSVRQMLEGQLGVVWLTGEISNFTQPVSGHWYFSLKDENAQVRCAMFRMKNMRVGFKAQNGMQVLVRASVSLYEPRGDYQLIIESMNLAGDGLLQRQFEALKLTLAAEGLFAQHYKKNLPHFAKSVGIITSPTGAALQDILHILQRRDPSLHVVIYPTAVQGKEATAEIVQMIELANKRREVDVLIVGRGGGSLEDLWCFNEERVARAIFHSELPIISAVGHETDVTIADFVADVRAPTPSAAAELVSRHQQELLDQLFYRKQRLEMALDRFFQQKVKLLQRLQFRLQQQHPQSQLNIQQKMMQQLLHRLHLALSTFVDKKQQKMTALCRRLDNSPLPYYVQKQHQILVQLELRLNSGLQKKFKNADYQLSRLCGKLDSLSPLKVLARGYSITKNQQGQALKNSHQIEVGQLISTQLERGIIVSRVEAMEE.

The protein belongs to the XseA family. As to quaternary structure, heterooligomer composed of large and small subunits.

It is found in the cytoplasm. It catalyses the reaction Exonucleolytic cleavage in either 5'- to 3'- or 3'- to 5'-direction to yield nucleoside 5'-phosphates.. Its function is as follows. Bidirectionally degrades single-stranded DNA into large acid-insoluble oligonucleotides, which are then degraded further into small acid-soluble oligonucleotides. The protein is Exodeoxyribonuclease 7 large subunit of Histophilus somni (strain 129Pt) (Haemophilus somnus).